We begin with the raw amino-acid sequence, 824 residues long: Protein-glutamine gamma-glutamyltransferase K (824 aa).

Basic and acidic residues predominate over residues 1 to 10; sequence MEGPRSDVGR. Disordered stretches follow at residues 1–44 and 61–110; these read MEGP…GGRS and DDWG…AAGD. A Phosphothreonine modification is found at T20. Phosphoserine occurs at positions 22, 70, 92, 100, and 103. Low complexity predominate over residues 65–76; the sequence is PEPSGSRSRGTS. A compositionally biased stretch (basic and acidic residues) spans 85–100; the sequence is GDSRGRDSRGGRRPES. Residues C385, H444, and D467 contribute to the active site. Residues N507, D509, E556, and E561 each contribute to the Ca(2+) site. Residues 801–824 form a disordered region; it reads RGFSEAVGDSRSGENIPMAFRGGA. S812 is modified (phosphoserine).

Belongs to the transglutaminase superfamily. Transglutaminase family. As to quaternary structure, interacts with PLAAT4. Ca(2+) is required as a cofactor. Post-translationally, palmitoylated. The membrane anchorage region possesses a cluster of five cysteines within which fatty acid(s) may become thioester-linked. It is subject to phorbol ester-stimulated phosphorylation and is hypersensitive to proteolysis, which releases the enzyme in a soluble form. In terms of processing, tyrosine-phosphorylated.

Its subcellular location is the membrane. The enzyme catalyses L-glutaminyl-[protein] + L-lysyl-[protein] = [protein]-L-lysyl-N(6)-5-L-glutamyl-[protein] + NH4(+). Functionally, catalyzes the cross-linking of proteins and the conjugation of polyamines to proteins. Responsible for cross-linking epidermal proteins during formation of the stratum corneum. Involved in cell proliferation. The polypeptide is Protein-glutamine gamma-glutamyltransferase K (Tgm1) (Rattus norvegicus (Rat)).